We begin with the raw amino-acid sequence, 274 residues long: Dermonecrotic toxin SdSicTox-betaIIB1bix (274 aa).

His5 is an active-site residue. Mg(2+) contacts are provided by Glu25 and Asp27. The active-site Nucleophile is His41. Intrachain disulfides connect Cys45–Cys51 and Cys47–Cys190. Asp85 contributes to the Mg(2+) binding site.

Belongs to the arthropod phospholipase D family. Class II subfamily. It depends on Mg(2+) as a cofactor. As to expression, expressed by the venom gland.

It is found in the secreted. It catalyses the reaction an N-(acyl)-sphingosylphosphocholine = an N-(acyl)-sphingosyl-1,3-cyclic phosphate + choline. The catalysed reaction is an N-(acyl)-sphingosylphosphoethanolamine = an N-(acyl)-sphingosyl-1,3-cyclic phosphate + ethanolamine. The enzyme catalyses a 1-acyl-sn-glycero-3-phosphocholine = a 1-acyl-sn-glycero-2,3-cyclic phosphate + choline. It carries out the reaction a 1-acyl-sn-glycero-3-phosphoethanolamine = a 1-acyl-sn-glycero-2,3-cyclic phosphate + ethanolamine. Its function is as follows. Dermonecrotic toxins cleave the phosphodiester linkage between the phosphate and headgroup of certain phospholipids (sphingolipid and lysolipid substrates), forming an alcohol (often choline) and a cyclic phosphate. This toxin acts on sphingomyelin (SM). It may also act on ceramide phosphoethanolamine (CPE), lysophosphatidylcholine (LPC) and lysophosphatidylethanolamine (LPE), but not on lysophosphatidylserine (LPS), and lysophosphatidylglycerol (LPG). It acts by transphosphatidylation, releasing exclusively cyclic phosphate products as second products. Induces dermonecrosis, hemolysis, increased vascular permeability, edema, inflammatory response, and platelet aggregation. In Sicarius cf. damarensis (strain GJB-2008) (Six-eyed sand spider), this protein is Dermonecrotic toxin SdSicTox-betaIIB1bix.